Reading from the N-terminus, the 424-residue chain is MSKTLQSIRGMHDVLPADTPAWQWLEAAARELLAGYGYEEIRMPIVEQTELFARSIGEVTDIVEKEMYTFEDRNGDSLTLRPEGTAGCVRAGIEHGLLHNQQQRLWYMGPMFRHERPQKGRYRQFHQIGVETFGMDGPDIDAELIILTARLWRVLGLKDVRLEINSLGSTEARAAYRALLVQHFEAHAEVLDEDARRRLHSNPLRILDSKNPAMREVIRSAPSLLDHLDEASRAHFEGLKALLTAAGIEFTVNPALVRGLDYYCRTVFEWITESLGAQGTVCAGGRYDGLVEQLGGRATPAAGFAMGLERLLALVEAGGARPPAPKPHAYLALAGEGTQAEGLRLAESLRDALPGLRLVVNGGGGGFKAQIKRADRSGADLALIIGESELAEGTILVKPLREAGGEQQAVPRDGLAEFLRARIG.

It belongs to the class-II aminoacyl-tRNA synthetase family. As to quaternary structure, homodimer.

The protein resides in the cytoplasm. The catalysed reaction is tRNA(His) + L-histidine + ATP = L-histidyl-tRNA(His) + AMP + diphosphate + H(+). This Thioalkalivibrio sulfidiphilus (strain HL-EbGR7) protein is Histidine--tRNA ligase.